The primary structure comprises 252 residues: Protein GrpE (252 aa).

The span at 1–22 (MHNPQSRGHNLSQAMSDQTVTN) shows a compositional bias: polar residues. Residues 1 to 70 (MHNPQSRGHN…EEDQASEATS (70 aa)) are disordered.

The protein belongs to the GrpE family. As to quaternary structure, homodimer.

The protein localises to the cytoplasm. Its function is as follows. Participates actively in the response to hyperosmotic and heat shock by preventing the aggregation of stress-denatured proteins, in association with DnaK and GrpE. It is the nucleotide exchange factor for DnaK and may function as a thermosensor. Unfolded proteins bind initially to DnaJ; upon interaction with the DnaJ-bound protein, DnaK hydrolyzes its bound ATP, resulting in the formation of a stable complex. GrpE releases ADP from DnaK; ATP binding to DnaK triggers the release of the substrate protein, thus completing the reaction cycle. Several rounds of ATP-dependent interactions between DnaJ, DnaK and GrpE are required for fully efficient folding. This chain is Protein GrpE, found in Thermosynechococcus vestitus (strain NIES-2133 / IAM M-273 / BP-1).